A 217-amino-acid chain; its full sequence is Adenylate kinase (217 aa).

Residue 10–15 (GAGKGT) coordinates ATP. Positions 30-59 (STGDLFRANISQQTELGKLAKSYMNAGNLV) are NMP. Residues Thr31, Arg36, 57 to 59 (NLV), 85 to 88 (GFPR), and Gln92 contribute to the AMP site. Residues 126–164 (GRRVCRNEPKHVFHVTYTPPKKEGVCDVCGGELYQRDDD) form an LID region. Residues Arg127 and 137-138 (VF) contribute to the ATP site. AMP contacts are provided by Arg161 and Arg172. Gly200 serves as a coordination point for ATP.

It belongs to the adenylate kinase family. As to quaternary structure, monomer.

The protein resides in the cytoplasm. It catalyses the reaction AMP + ATP = 2 ADP. Its pathway is purine metabolism; AMP biosynthesis via salvage pathway; AMP from ADP: step 1/1. Functionally, catalyzes the reversible transfer of the terminal phosphate group between ATP and AMP. Plays an important role in cellular energy homeostasis and in adenine nucleotide metabolism. The polypeptide is Adenylate kinase (Streptomyces coelicolor (strain ATCC BAA-471 / A3(2) / M145)).